Reading from the N-terminus, the 643-residue chain is MHGLLLAGLLALPLNVLAHPTESHSSGVSRRAIDITSYRLPQISKYTKSDAVPKQDGESFTTSSTGDDNVSSGDYVTTATNWLKKTLPKATYRLVNDHYIGDSGIGHVHFRQTAHGIDIDNTDFNVNIGRDGKVFSFGNSFYDGEIPKANPMVKRDFSDPVNALHGAIQTLNLPVTAKPENVKAKPVEGKENFKFEGTSGALSDPKAQLVYLQKDGGLVLSWKVETDVGDNWLLTYVDANKNDQVHSVVDYVSAAEYQVYPWGINDPTEGNRTSIHLPWLKTLSTDWHIDGKGWYPTTRGNNAIAQENPTGHPEYENNYRPKSPLFIFKYPYSLAMTPPSSYRDASITQLFYTTNVYHDVLYILGFNEKAGNFQINNWNKGGVGGDFAILNSQDGSGVNNANFATPPDGQPGRMRMYTWNASTPERDGCFEAGIVIHEYTHGVSNRLTGGPENSRCLAALESGGMGEGWSDFFATAIRLKPGDTRATDYTMGEWASNRPNGIRKYRYSTSLTTNPHMYVDADGLTSVHAIGTIWASMLYELLWNLIDKHGKGDVTKIRPVLKNGVPTDGRHLAMKIVLDGMALQPCLPNFVQARDAILDADKNLTQGSNKCEIWKAFAKRGLGVGAAFNQTKRTGSNELPAGC.

The first 18 residues, 1 to 18, serve as a signal peptide directing secretion; it reads MHGLLLAGLLALPLNVLA. The propeptide occupies 19 to 254; that stretch reads HPTESHSSGV…VHSVVDYVSA (236 aa). Positions 47-57 are enriched in basic and acidic residues; sequence TKSDAVPKQDG. Positions 47–69 are disordered; that stretch reads TKSDAVPKQDGESFTTSSTGDDN. Residues 58–69 are compositionally biased toward polar residues; sequence ESFTTSSTGDDN. Residues Asn271 and Asn420 are each glycosylated (N-linked (GlcNAc...) asparagine). His437 is a Zn(2+) binding site. The active site involves Glu438. His441 provides a ligand contact to Zn(2+). Residues Asn603 and Asn629 are each glycosylated (N-linked (GlcNAc...) asparagine).

This sequence belongs to the peptidase M36 family. Zn(2+) serves as cofactor.

The protein localises to the secreted. Its function is as follows. Secreted metalloproteinase probably acting as a virulence factor. The protein is Probable extracellular metalloproteinase 4 (MEP4) of Arthroderma benhamiae (strain ATCC MYA-4681 / CBS 112371) (Trichophyton mentagrophytes).